We begin with the raw amino-acid sequence, 88 residues long: Conotoxin Gm9.1 (88 aa).

The signal sequence occupies residues 1 to 27; sequence MHLSLARSAVLMLLLLFALGNFVVVQS. A propeptide spanning residues 28 to 58 is cleaved from the precursor; it reads GLITRDVDNGQLTDNRRNLQTEWNPLSLFMS. 3 disulfides stabilise this stretch: C62/C76, C66/C78, and C72/C83. At N87 the chain carries Asparagine amide.

It belongs to the conotoxin P superfamily. As to expression, expressed by the venom duct.

It localises to the secreted. Neurotoxin. In vivo, elicits 'spasmodic' symptomatology. The protein is Conotoxin Gm9.1 of Conus gloriamaris (Glory-of-the-Sea cone).